We begin with the raw amino-acid sequence, 443 residues long: Xaa-Pro dipeptidase (443 aa).

5 residues coordinate Mn(2+): Asp-246, Asp-257, His-339, Glu-384, and Glu-423.

This sequence belongs to the peptidase M24B family. Bacterial-type prolidase subfamily. Requires Mn(2+) as cofactor.

It catalyses the reaction Xaa-L-Pro dipeptide + H2O = an L-alpha-amino acid + L-proline. Splits dipeptides with a prolyl residue in the C-terminal position. The polypeptide is Xaa-Pro dipeptidase (Enterobacter sp. (strain 638)).